A 201-amino-acid chain; its full sequence is MTESESAAVPVDAAAFREAMSRLASAVHLITTDGPGGRAGFTASAVCSVSDAPPTLLVCINRASSAYAALTQNGTLCVNTLGEGHETVASLFGGRTPVDERFAAGTWRRLRSGAPALADALVSFDCRIVGRHAVGSHDVLYCAVEAVAASGQADALLYSERRYRTLPRAPRSGSAPAEPARAARAVGARPAEGPALALRSA.

Residues 167-195 (PRAPRSGSAPAEPARAARAVGARPAEGPA) are compositionally biased toward low complexity. Residues 167 to 201 (PRAPRSGSAPAEPARAARAVGARPAEGPALALRSA) form a disordered region.

This sequence belongs to the non-flavoprotein flavin reductase family. RutF subfamily.

The enzyme catalyses FMNH2 + NAD(+) = FMN + NADH + 2 H(+). Functionally, catalyzes the reduction of FMN to FMNH2 which is used to reduce pyrimidine by RutA via the Rut pathway. In Methylorubrum extorquens (strain CM4 / NCIMB 13688) (Methylobacterium extorquens), this protein is FMN reductase (NADH) RutF 1.